Consider the following 499-residue polypeptide: Maturase K (499 aa).

The protein belongs to the intron maturase 2 family. MatK subfamily.

The protein localises to the plastid. It localises to the chloroplast. Functionally, usually encoded in the trnK tRNA gene intron. Probably assists in splicing its own and other chloroplast group II introns. This Neltuma juliflora (Mesquite) protein is Maturase K.